The chain runs to 109 residues: Aquaporin-2 (109 aa).

The Cytoplasmic segment spans residues 1-6; sequence SIAFSR. The helical transmembrane segment at 7 to 27 threads the bilayer; the sequence is AVFAEFLATLIFVFFGLGSAL. Over 28–35 the chain is Extracellular; that stretch reads NWQQSLPS. The chain crosses the membrane as a helical span at residues 36–54; it reads VLQIAMAFGLAIGTLVQAL. The Cytoplasmic segment spans residues 55–59; sequence GHISG. Positions 60 to 69 form an intramembrane region, discontinuously helical; that stretch reads AHINPAVTVA. Residues 63 to 65 carry the NPA 1 motif; the sequence is NPA. At 70–80 the chain is on the cytoplasmic side; it reads CLVGCHVSFLR. The helical transmembrane segment at 81–102 threads the bilayer; it reads AAFYVAAQLLGAVAGAALLHEV. Residues 103–109 are Extracellular-facing; the sequence is TPSDVRG.

Belongs to the MIP/aquaporin (TC 1.A.8) family. Homotetramer. In terms of processing, serine phosphorylation is necessary and sufficient for expression at the apical membrane. Endocytosis is not phosphorylation-dependent. N-glycosylated.

The protein resides in the apical cell membrane. The protein localises to the basolateral cell membrane. It localises to the cell membrane. Its subcellular location is the cytoplasmic vesicle membrane. It is found in the golgi apparatus. The protein resides in the trans-Golgi network membrane. It catalyses the reaction H2O(in) = H2O(out). It carries out the reaction glycerol(in) = glycerol(out). Functionally, forms a water-specific channel that provides the plasma membranes of renal collecting duct with high permeability to water, thereby permitting water to move in the direction of an osmotic gradient. Plays an essential role in renal water homeostasis. Could also be permeable to glycerol. This Talpa europaea (European mole) protein is Aquaporin-2.